The primary structure comprises 113 residues: Protein translation factor SUI1 homolog (113 aa).

It belongs to the SUI1 family.

Probably involved in translation. The chain is Protein translation factor SUI1 homolog from Spuriopimpinella brachycarpa (Chamnamul).